Consider the following 131-residue polypeptide: Putative gene 51 protein (131 aa).

This is Putative gene 51 protein (51) from Bacillus phage SP01 (Bacteriophage SP01).